Consider the following 129-residue polypeptide: Histone H3-like centromeric protein A (129 aa).

The segment covering 1-14 (MGPRRKPRTPRRRP) has biased composition (basic residues). The tract at residues 1-30 (MGPRRKPRTPRRRPSSPVPGPSRRSSRPGK) is disordered. Gly2 is modified (n,N,N-trimethylglycine). Phosphoserine is present on residues Ser16, Ser22, and Ser57. Residues 30–129 (KRRKFLWLKE…RIRGIEGGLG (100 aa)) are H3-like. Positions 64-105 (CGKFTRGVDLCWQAQALLALQEAAEAFLVHLFEDAYLLTLHA) are CATD.

The protein belongs to the histone H3 family. In terms of assembly, component of centromeric nucleosomes, where DNA is wrapped around a histone octamer core. The octamer contains two molecules each of H2A, H2B, CENPA and H4 assembled in one CENPA-H4 heterotetramer and two H2A-H2B heterodimers. CENPA modulates the DNA-binding characteristics of nucleosomes so that protruding DNA ends have higher flexibility than in nucleosomes containing conventional histone H3. Inhibits binding of histone H1 to nucleosomes, since histone H1 binds preferentially to rigid DNA linkers that protrude from nucleosomes. Nucleosomes containing CENPA also contain histone H2A variants such as MACROH2A and H2A.Z/H2AZ1. The CENPA-H4 heterotetramer is more compact and structurally more rigid than corresponding H3-H4 heterotetramers. Can assemble into nucleosomes that contain both CENPA and histone H3.3; these nucleosomes interact with a single CENPC chain. Heterotrimer composed of HJURP, CENPA and histone H4, where HJURP interacts with the dimer formed by CENPA and histone H4 and prevents tetramerization of CENPA and H4. Component of the CENPA-NAC complex, at least composed of CENPA, CENPC, CENPH, CENPM, CENPN, CENPT and CENPU. Interacts (via CATD domain) with HJURP; the interaction is direct and is required for its localization to centromeres. Interacts with CENPC, CENPN and CENPT; interaction is direct. Part of a centromere complex consisting of CENPA, CENPT and CENPW. Identified in centromere complexes containing histones H2A, H2B and H4, and at least CENPA, CENPB, CENPC, CENPT, CENPN, HJURP, SUPT16H, SSRP1 and RSF1. Can self-associate. The CENPA-H4 heterotetramer can bind DNA by itself (in vitro). Interacts with CDK1, PPP1CA and RBBP7. Trimethylated by NTMT1 at the N-terminal glycine after cleavage of Met-1. Methylation is low before incorporation into nucleosomes and increases with cell cycle progression, with the highest levels in mitotic nucleosomes. Post-translationally, phosphorylated by CDK1 at Ser-57 during early mitosis; this abolishes association with chromatin and centromeres, prevents interaction with HJURP and thereby prevents premature assembly of CENPA into centromeres. Dephosphorylated at Ser-57 by PPP1CA during late mitosis. In terms of processing, poly-ADP-ribosylated by PARP1.

It is found in the nucleus. The protein resides in the chromosome. Its subcellular location is the centromere. Histone H3-like nucleosomal protein that is specifically found in centromeric nucleosomes. Replaces conventional H3 in the nucleosome core of centromeric chromatin that serves as an assembly site for the inner kinetochore. The presence of CENPA subtly modifies the nucleosome structure and the way DNA is wrapped around the nucleosome and gives rise to protruding DNA ends that are less well-ordered and rigid compared to nucleosomes containing histone H3. May serve as an epigenetic mark that propagates centromere identity through replication and cell division. Required for recruitment and assembly of kinetochore proteins, and as a consequence required for progress through mitosis, chromosome segregation and cytokinesis. This Cricetulus griseus (Chinese hamster) protein is Histone H3-like centromeric protein A (CENPA).